The primary structure comprises 953 residues: Coatomer subunit beta (953 aa).

Residue threonine 2 is modified to N-acetylthreonine. HEAT repeat units follow at residues 96–131, 132–168, 240–276, 277–314, 316–353, and 396–433; these read HEMI…KEAE, LLEP…NFEH, SERA…SAPT, AIKA…HPAH, RVLQ…SRNV, and DMAA…RFDN. Residue lysine 494 is modified to N6-acetyllysine.

As to quaternary structure, oligomeric complex that consists of at least the alpha, beta, beta', gamma, delta, epsilon and zeta subunits. Interacts with SCYL1. Interacts with COPG1. Interacts (via trunk domain) with ARF1 (via switch I region); the interaction is direct. Interacts with KCNK2/TREK (via N-terminus); this interaction increases the channel-mediated whole cell currents and promotes plasma membrane expression of KCNK2/TREK. Interacts with anthrax lethal factor (LF); this interaction may facilitate endosomal vesicle membrane translocation of LF and its release from the lumen of endosomal vesicles to external milieu. Interacts with CAPN8 and PRKCE. Interacts with ARF1 (myristoylated); this interaction is required for binding of COPB1 to Golgi membranes. Interacts with STX17. Interacts with TMEM115. Interacts with HLA-G-B2M complex; this interaction mediates the endoplasmic reticulum (ER) retrieval of HLA-E-B2M complexes that bind low affinity peptides. Interacts with TMEM41B. (Microbial infection) Interacts (via C-terminus) with HIV-1 Nef; the interaction is direct. Proteolytically cleaved between Ser-528 and Ser-529 by CAPN8.

Its subcellular location is the cytoplasm. The protein resides in the golgi apparatus membrane. The protein localises to the cytoplasmic vesicle. It localises to the COPI-coated vesicle membrane. It is found in the cell membrane. Its subcellular location is the endoplasmic reticulum-Golgi intermediate compartment. Functionally, the coatomer is a cytosolic protein complex that binds to dilysine motifs and reversibly associates with Golgi non-clathrin-coated vesicles, which further mediate biosynthetic protein transport from the ER, via the Golgi up to the trans Golgi network. Coatomer complex is required for budding from Golgi membranes, and is essential for the retrograde Golgi-to-ER transport of dilysine-tagged proteins. In mammals, the coatomer can only be recruited by membranes associated to ADP-ribosylation factors (ARFs), which are small GTP-binding proteins; the complex also influences the Golgi structural integrity, as well as the processing, activity, and endocytic recycling of LDL receptors. Plays a functional role in facilitating the transport of kappa-type opioid receptor mRNAs into axons and enhances translation of these proteins. Required for limiting lipid storage in lipid droplets. Involved in lipid homeostasis by regulating the presence of perilipin family members PLIN2 and PLIN3 at the lipid droplet surface and promoting the association of adipocyte surface triglyceride lipase (PNPLA2) with the lipid droplet to mediate lipolysis. Involved in the Golgi disassembly and reassembly processes during cell cycle. Involved in autophagy by playing a role in early endosome function. Plays a role in organellar compartmentalization of secretory compartments including endoplasmic reticulum (ER)-Golgi intermediate compartment (ERGIC), Golgi, trans-Golgi network (TGN) and recycling endosomes, and in biosynthetic transport of CAV1. Promotes degradation of Nef cellular targets CD4 and MHC class I antigens by facilitating their trafficking to degradative compartments. The protein is Coatomer subunit beta of Homo sapiens (Human).